We begin with the raw amino-acid sequence, 383 residues long: tRNA(Met) cytidine acetate ligase (383 aa).

ATP-binding positions include 7 to 20 (IAEF…HEFL), G101, N153, and 178 to 179 (RI).

The protein belongs to the TmcAL family.

The protein localises to the cytoplasm. The enzyme catalyses cytidine(34) in elongator tRNA(Met) + acetate + ATP = N(4)-acetylcytidine(34) in elongator tRNA(Met) + AMP + diphosphate. In terms of biological role, catalyzes the formation of N(4)-acetylcytidine (ac(4)C) at the wobble position of elongator tRNA(Met), using acetate and ATP as substrates. First activates an acetate ion to form acetyladenylate (Ac-AMP) and then transfers the acetyl group to tRNA to form ac(4)C34. This Lactobacillus helveticus (strain DPC 4571) protein is tRNA(Met) cytidine acetate ligase.